Here is a 439-residue protein sequence, read N- to C-terminus: Proline--tRNA ligase (439 aa).

It belongs to the class-II aminoacyl-tRNA synthetase family. ProS type 2 subfamily. In terms of assembly, homodimer.

It is found in the cytoplasm. The catalysed reaction is tRNA(Pro) + L-proline + ATP = L-prolyl-tRNA(Pro) + AMP + diphosphate. Its function is as follows. Catalyzes the attachment of proline to tRNA(Pro) in a two-step reaction: proline is first activated by ATP to form Pro-AMP and then transferred to the acceptor end of tRNA(Pro). The protein is Proline--tRNA ligase of Rhodopseudomonas palustris (strain BisB18).